The following is a 343-amino-acid chain: Thiamine thiazole synthase 4, chloroplastic (343 aa).

Substrate contacts are provided by residues A89, 109–110 (EQ), G117, and A182. 2,3-didehydroalanine (Cys) is present on C211. Substrate is bound by residues D213, H228, M280, and 290 to 292 (RMG).

It belongs to the THI4 family. Homooctamer. It depends on Fe cation as a cofactor. Post-translationally, during the catalytic reaction, a sulfide is transferred from Cys-211 to a reaction intermediate, generating a dehydroalanine residue.

It is found in the plastid. The protein resides in the chloroplast. It carries out the reaction [ADP-thiazole synthase]-L-cysteine + glycine + NAD(+) = [ADP-thiazole synthase]-dehydroalanine + ADP-5-ethyl-4-methylthiazole-2-carboxylate + nicotinamide + 3 H2O + 2 H(+). In terms of biological role, involved in biosynthesis of the thiamine precursor thiazole. Catalyzes the conversion of NAD and glycine to adenosine diphosphate 5-(2-hydroxyethyl)-4-methylthiazole-2-carboxylic acid (ADT), an adenylated thiazole intermediate. The reaction includes an iron-dependent sulfide transfer from a conserved cysteine residue of the protein to a thiazole intermediate. The enzyme can only undergo a single turnover, which suggests it is a suicide enzyme. May have additional roles in adaptation to various stress conditions and in DNA damage tolerance. The polypeptide is Thiamine thiazole synthase 4, chloroplastic (Physcomitrium patens (Spreading-leaved earth moss)).